The primary structure comprises 968 residues: RNA polymerase-associated protein RapA (968 aa).

A Helicase ATP-binding domain is found at 164–334; sequence DVGRRHAPRV…FARLRLLDPN (171 aa). Residue 177–184 coordinates ATP; it reads DEVGLGKT. Positions 280–283 match the DEAH box motif; the sequence is DEAH. In terms of domain architecture, Helicase C-terminal spans 490–685; the sequence is RVEWLMGYLT…ALKAQLEQGR (196 aa).

This sequence belongs to the SNF2/RAD54 helicase family. RapA subfamily. Interacts with the RNAP. Has a higher affinity for the core RNAP than for the holoenzyme. Its ATPase activity is stimulated by binding to RNAP.

Its function is as follows. Transcription regulator that activates transcription by stimulating RNA polymerase (RNAP) recycling in case of stress conditions such as supercoiled DNA or high salt concentrations. Probably acts by releasing the RNAP, when it is trapped or immobilized on tightly supercoiled DNA. Does not activate transcription on linear DNA. Probably not involved in DNA repair. This is RNA polymerase-associated protein RapA from Salmonella newport (strain SL254).